A 397-amino-acid polypeptide reads, in one-letter code: B3 domain-containing protein At4g34400 (397 aa).

Positions proline 14–tyrosine 107 form a DNA-binding region, TF-B3. A disordered region spans residues glutamate 118 to threonine 255. Over residues threonine 137–valine 160 the composition is skewed to basic and acidic residues. Composition is skewed to acidic residues over residues valine 161–aspartate 186, serine 212–tyrosine 227, and aspartate 235–serine 246.

It localises to the nucleus. The polypeptide is B3 domain-containing protein At4g34400 (Arabidopsis thaliana (Mouse-ear cress)).